The primary structure comprises 98 residues: NADH-ubiquinone oxidoreductase chain 4L (98 aa).

Helical transmembrane passes span 1–21 (MHYIYINIIIAFSMSLLGALL), 29–49 (SLLCLEGMMLALFVLSTLIAL), and 61–81 (IILLVFAACEAAIGLSLLVMV).

This sequence belongs to the complex I subunit 4L family. Core subunit of respiratory chain NADH dehydrogenase (Complex I) which is composed of 45 different subunits.

Its subcellular location is the mitochondrion inner membrane. It catalyses the reaction a ubiquinone + NADH + 5 H(+)(in) = a ubiquinol + NAD(+) + 4 H(+)(out). Core subunit of the mitochondrial membrane respiratory chain NADH dehydrogenase (Complex I) which catalyzes electron transfer from NADH through the respiratory chain, using ubiquinone as an electron acceptor. Part of the enzyme membrane arm which is embedded in the lipid bilayer and involved in proton translocation. The chain is NADH-ubiquinone oxidoreductase chain 4L (MT-ND4L) from Procavia capensis (Rock hyrax).